Consider the following 453-residue polypeptide: tRNA(Ile)-lysidine synthase (453 aa).

An ATP-binding site is contributed by 27 to 32 (SGGSDS).

It belongs to the tRNA(Ile)-lysidine synthase family.

It is found in the cytoplasm. The enzyme catalyses cytidine(34) in tRNA(Ile2) + L-lysine + ATP = lysidine(34) in tRNA(Ile2) + AMP + diphosphate + H(+). Functionally, ligates lysine onto the cytidine present at position 34 of the AUA codon-specific tRNA(Ile) that contains the anticodon CAU, in an ATP-dependent manner. Cytidine is converted to lysidine, thus changing the amino acid specificity of the tRNA from methionine to isoleucine. This is tRNA(Ile)-lysidine synthase from Rhizobium meliloti (strain 1021) (Ensifer meliloti).